A 354-amino-acid polypeptide reads, in one-letter code: Putative cinnamyl alcohol dehydrogenase 4 (354 aa).

Residues Cys-47, His-69, Glu-70, Cys-100, Cys-103, Cys-106, Cys-114, and Cys-163 each contribute to the Zn(2+) site. NADP(+)-binding positions include Thr-167, 188–193, 211–216, Thr-251, and 297–299; these read GLGGLG, STSESK, and SVT.

The protein belongs to the zinc-containing alcohol dehydrogenase family. Homodimer. Requires Zn(2+) as cofactor.

It carries out the reaction (E)-cinnamyl alcohol + NADP(+) = (E)-cinnamaldehyde + NADPH + H(+). It catalyses the reaction (E)-coniferol + NADP(+) = (E)-coniferaldehyde + NADPH + H(+). The enzyme catalyses (E)-sinapyl alcohol + NADP(+) = (E)-sinapaldehyde + NADPH + H(+). The catalysed reaction is (E)-4-coumaroyl alcohol + NADP(+) = (E)-4-coumaraldehyde + NADPH + H(+). It carries out the reaction (E)-caffeyl alcohol + NADP(+) = (E)-caffeyl aldehyde + NADPH + H(+). It functions in the pathway aromatic compound metabolism; phenylpropanoid biosynthesis. Involved in lignin biosynthesis. Catalyzes the final step specific for the production of lignin monomers. Catalyzes the NADPH-dependent reduction of coniferaldehyde, 5-hydroxyconiferaldehyde, sinapaldehyde, 4-coumaraldehyde and caffeyl aldehyde to their respective alcohols. The protein is Putative cinnamyl alcohol dehydrogenase 4 of Oryza sativa subsp. japonica (Rice).